Consider the following 364-residue polypeptide: 3-isopropylmalate dehydrogenase (364 aa).

78 to 91 (GKKWDNFPIEERPE) provides a ligand contact to NAD(+). Substrate-binding residues include R99, R109, R138, and D228. D228, D252, and D256 together coordinate Mg(2+). 286-298 (GSAPDIAGKNIAN) is an NAD(+) binding site.

This sequence belongs to the isocitrate and isopropylmalate dehydrogenases family. LeuB type 1 subfamily. As to quaternary structure, homodimer. Mg(2+) serves as cofactor. Mn(2+) is required as a cofactor.

Its subcellular location is the cytoplasm. The enzyme catalyses (2R,3S)-3-isopropylmalate + NAD(+) = 4-methyl-2-oxopentanoate + CO2 + NADH. It participates in amino-acid biosynthesis; L-leucine biosynthesis; L-leucine from 3-methyl-2-oxobutanoate: step 3/4. Its function is as follows. Catalyzes the oxidation of 3-carboxy-2-hydroxy-4-methylpentanoate (3-isopropylmalate) to 3-carboxy-4-methyl-2-oxopentanoate. The product decarboxylates to 4-methyl-2 oxopentanoate. This Buchnera aphidicola subsp. Uroleucon obscurum protein is 3-isopropylmalate dehydrogenase.